The following is a 117-amino-acid chain: DNA-directed RNA polymerase subunit omega (117 aa).

The protein belongs to the RNA polymerase subunit omega family. The RNAP catalytic core consists of 2 alpha, 1 beta, 1 beta' and 1 omega subunit. When a sigma factor is associated with the core the holoenzyme is formed, which can initiate transcription.

The enzyme catalyses RNA(n) + a ribonucleoside 5'-triphosphate = RNA(n+1) + diphosphate. Its function is as follows. Promotes RNA polymerase assembly. Latches the N- and C-terminal regions of the beta' subunit thereby facilitating its interaction with the beta and alpha subunits. The polypeptide is DNA-directed RNA polymerase subunit omega (Ruegeria sp. (strain TM1040) (Silicibacter sp.)).